The primary structure comprises 354 residues: Hyaluronan and proteoglycan link protein 1 (354 aa).

Residues Met-1–Leu-9 constitute a propeptide that is removed on maturation. Residues Asn-21 and Asn-56 are each glycosylated (N-linked (GlcNAc...) asparagine). An Ig-like V-type domain is found at Pro-38 to Val-152. Disulfide bonds link Cys-61-Cys-139, Cys-181-Cys-252, Cys-205-Cys-226, Cys-279-Cys-349, and Cys-304-Cys-325. Link domains lie at Val-159–Thr-254 and Gly-259–Arg-351.

The protein belongs to the HAPLN family.

It localises to the secreted. The protein resides in the extracellular space. The protein localises to the extracellular matrix. In terms of biological role, stabilizes the aggregates of proteoglycan monomers with hyaluronic acid in the extracellular cartilage matrix. This chain is Hyaluronan and proteoglycan link protein 1 (HAPLN1), found in Sus scrofa (Pig).